We begin with the raw amino-acid sequence, 123 residues long: Large ribosomal subunit protein uL14 (123 aa).

Belongs to the universal ribosomal protein uL14 family. In terms of assembly, part of the 50S ribosomal subunit. Forms a cluster with proteins L3 and L19. In the 70S ribosome, L14 and L19 interact and together make contacts with the 16S rRNA in bridges B5 and B8.

Binds to 23S rRNA. Forms part of two intersubunit bridges in the 70S ribosome. The sequence is that of Large ribosomal subunit protein uL14 from Blochmanniella floridana.